The primary structure comprises 523 residues: Rho guanine nucleotide exchange factor 8 (523 aa).

Polar residues predominate over residues 44–57; sequence VESNTPESQNSDSF. Disordered regions lie at residues 44-83 and 442-523; these read VESN…ERQQ and ETSD…KDRH. Residues 76–440 form the PRONE domain; it reads GKRSERQQAD…TLALKQTLLA (365 aa). Over residues 465–475 the composition is skewed to basic and acidic residues; sequence EAEKHDPHSKT.

As to quaternary structure, homodimer. The homodimer interacts with ARAC5/ROP4. Interacts with ARAC11/ROP1 and ARAC10/ROP11. Interacts with PRK6. In terms of tissue distribution, expressed in pollen grains and pollen tubes.

The protein resides in the cell membrane. Its function is as follows. Guanine-nucleotide exchange factor (GEF) that acts as an activator of Rop (Rho of plants) GTPases by promoting the exchange of GDP for GTP. Active as homodimer. This is Rho guanine nucleotide exchange factor 8 from Arabidopsis thaliana (Mouse-ear cress).